The following is a 170-amino-acid chain: NADH-quinone oxidoreductase subunit B (170 aa).

[4Fe-4S] cluster is bound by residues Cys37, Cys38, Cys102, and Cys131.

Belongs to the complex I 20 kDa subunit family. NDH-1 is composed of 14 different subunits. Subunits NuoB, C, D, E, F, and G constitute the peripheral sector of the complex. The cofactor is [4Fe-4S] cluster.

Its subcellular location is the cell inner membrane. The catalysed reaction is a quinone + NADH + 5 H(+)(in) = a quinol + NAD(+) + 4 H(+)(out). NDH-1 shuttles electrons from NADH, via FMN and iron-sulfur (Fe-S) centers, to quinones in the respiratory chain. The immediate electron acceptor for the enzyme in this species is believed to be ubiquinone. Couples the redox reaction to proton translocation (for every two electrons transferred, four hydrogen ions are translocated across the cytoplasmic membrane), and thus conserves the redox energy in a proton gradient. The sequence is that of NADH-quinone oxidoreductase subunit B from Geobacter sulfurreducens (strain ATCC 51573 / DSM 12127 / PCA).